Here is a 176-residue protein sequence, read N- to C-terminus: Large ribosomal subunit protein uL10 (176 aa).

The protein belongs to the universal ribosomal protein uL10 family. In terms of assembly, part of the ribosomal stalk of the 50S ribosomal subunit. The N-terminus interacts with L11 and the large rRNA to form the base of the stalk. The C-terminus forms an elongated spine to which L12 dimers bind in a sequential fashion forming a multimeric L10(L12)X complex.

Forms part of the ribosomal stalk, playing a central role in the interaction of the ribosome with GTP-bound translation factors. This chain is Large ribosomal subunit protein uL10, found in Teredinibacter turnerae (strain ATCC 39867 / T7901).